Here is a 206-residue protein sequence, read N- to C-terminus: Holliday junction branch migration complex subunit RuvA (206 aa).

A domain I region spans residues 1–63 (MIASLRGTVI…EDAMKLYGFI (63 aa)). A domain II region spans residues 64-142 (DNESREMFSV…AFAAGVVDEG (79 aa)). Residues 143–153 (GEQISLPNANI) form a flexible linker region. The interval 154-206 (ASEVVVEQVSQALVGLGFSEKQSDDAVSFVLAADPSLDTSGALRAALAKLSGK) is domain III.

This sequence belongs to the RuvA family. In terms of assembly, homotetramer. Forms an RuvA(8)-RuvB(12)-Holliday junction (HJ) complex. HJ DNA is sandwiched between 2 RuvA tetramers; dsDNA enters through RuvA and exits via RuvB. An RuvB hexamer assembles on each DNA strand where it exits the tetramer. Each RuvB hexamer is contacted by two RuvA subunits (via domain III) on 2 adjacent RuvB subunits; this complex drives branch migration. In the full resolvosome a probable DNA-RuvA(4)-RuvB(12)-RuvC(2) complex forms which resolves the HJ.

The protein resides in the cytoplasm. Functionally, the RuvA-RuvB-RuvC complex processes Holliday junction (HJ) DNA during genetic recombination and DNA repair, while the RuvA-RuvB complex plays an important role in the rescue of blocked DNA replication forks via replication fork reversal (RFR). RuvA specifically binds to HJ cruciform DNA, conferring on it an open structure. The RuvB hexamer acts as an ATP-dependent pump, pulling dsDNA into and through the RuvAB complex. HJ branch migration allows RuvC to scan DNA until it finds its consensus sequence, where it cleaves and resolves the cruciform DNA. In Corynebacterium glutamicum (strain ATCC 13032 / DSM 20300 / JCM 1318 / BCRC 11384 / CCUG 27702 / LMG 3730 / NBRC 12168 / NCIMB 10025 / NRRL B-2784 / 534), this protein is Holliday junction branch migration complex subunit RuvA.